The sequence spans 335 residues: Beta-ketoacyl-[acyl-carrier-protein] synthase III 2 (335 aa).

Residues cysteine 116 and histidine 256 contribute to the active site. Positions 257-261 are ACP-binding; sequence QANVR. Asparagine 286 is a catalytic residue.

Belongs to the thiolase-like superfamily. FabH family. In terms of assembly, homodimer.

The protein localises to the cytoplasm. The enzyme catalyses malonyl-[ACP] + acetyl-CoA + H(+) = 3-oxobutanoyl-[ACP] + CO2 + CoA. It participates in lipid metabolism; fatty acid biosynthesis. In terms of biological role, catalyzes the condensation reaction of fatty acid synthesis by the addition to an acyl acceptor of two carbons from malonyl-ACP. Catalyzes the first condensation reaction which initiates fatty acid synthesis and may therefore play a role in governing the total rate of fatty acid production. Possesses both acetoacetyl-ACP synthase and acetyl transacylase activities. Its substrate specificity determines the biosynthesis of branched-chain and/or straight-chain of fatty acids. The polypeptide is Beta-ketoacyl-[acyl-carrier-protein] synthase III 2 (Bacteroides thetaiotaomicron (strain ATCC 29148 / DSM 2079 / JCM 5827 / CCUG 10774 / NCTC 10582 / VPI-5482 / E50)).